We begin with the raw amino-acid sequence, 138 residues long: BPTI/Kunitz domain-containing protein 1 (138 aa).

A signal peptide spans 1–19 (MYTLYILSLLCAFVTFSEC). One can recognise a BPTI/Kunitz inhibitor domain in the interval 72–122 (CTLPRKIGPCRASIPRYYFNFVTKRCELFFWGGCQPNKNNFETIYDCQGYC). 3 cysteine pairs are disulfide-bonded: C72–C122, C81–C105, and C97–C118.

In terms of tissue distribution, prismatic layer of shell (at protein level). Expressed primarily in the mantle with highest level in the mantle edge and lower level in the mantle pallium.

The protein localises to the secreted. This Pinctada maxima (Silver-lipped pearl oyster) protein is BPTI/Kunitz domain-containing protein 1.